The primary structure comprises 130 residues: MAKPIPRIGSRRNGRRIPKGVIHVQASFNNTIVTVTDVRGRVVSWSSAGTCGFRGTRRGTPFAAQTAAGNAIRTVVDQGMQRAEVMIKGPGLGRDAALRAIRRSGILLSFVRDVTPMPHNGCRPPKKRRV.

The protein belongs to the universal ribosomal protein uS11 family. As to quaternary structure, part of the 30S ribosomal subunit.

It localises to the plastid. The protein localises to the chloroplast. The polypeptide is Small ribosomal subunit protein uS11c (Drimys granadensis).